Consider the following 153-residue polypeptide: NAD(P)H-quinone oxidoreductase subunit N (153 aa).

The protein belongs to the complex I NdhN subunit family. As to quaternary structure, NDH-1 can be composed of about 15 different subunits; different subcomplexes with different compositions have been identified which probably have different functions.

Its subcellular location is the cellular thylakoid membrane. It catalyses the reaction a plastoquinone + NADH + (n+1) H(+)(in) = a plastoquinol + NAD(+) + n H(+)(out). The enzyme catalyses a plastoquinone + NADPH + (n+1) H(+)(in) = a plastoquinol + NADP(+) + n H(+)(out). NDH-1 shuttles electrons from an unknown electron donor, via FMN and iron-sulfur (Fe-S) centers, to quinones in the respiratory and/or the photosynthetic chain. The immediate electron acceptor for the enzyme in this species is believed to be plastoquinone. Couples the redox reaction to proton translocation, and thus conserves the redox energy in a proton gradient. Cyanobacterial NDH-1 also plays a role in inorganic carbon-concentration. This is NAD(P)H-quinone oxidoreductase subunit N from Parasynechococcus marenigrum (strain WH8102).